Here is a 414-residue protein sequence, read N- to C-terminus: CinA-like protein (414 aa).

It belongs to the CinA family.

The sequence is that of CinA-like protein from Geobacter sp. (strain M21).